A 399-amino-acid chain; its full sequence is Beta sliding clamp (399 aa).

It belongs to the beta sliding clamp family. As to quaternary structure, forms a ring-shaped head-to-tail homodimer around DNA which binds and tethers DNA polymerases and other proteins to the DNA. The DNA replisome complex has a single clamp-loading complex (3 tau and 1 each of delta, delta', psi and chi subunits) which binds 3 Pol III cores (1 core on the leading strand and 2 on the lagging strand) each with a beta sliding clamp dimer. Additional proteins in the replisome are other copies of gamma, psi and chi, Ssb, DNA helicase and RNA primase.

The protein resides in the cytoplasm. Functionally, confers DNA tethering and processivity to DNA polymerases and other proteins. Acts as a clamp, forming a ring around DNA (a reaction catalyzed by the clamp-loading complex) which diffuses in an ATP-independent manner freely and bidirectionally along dsDNA. Initially characterized for its ability to contact the catalytic subunit of DNA polymerase III (Pol III), a complex, multichain enzyme responsible for most of the replicative synthesis in bacteria; Pol III exhibits 3'-5' exonuclease proofreading activity. The beta chain is required for initiation of replication as well as for processivity of DNA replication. The protein is Beta sliding clamp (dnaN) of Mycobacterium leprae (strain TN).